A 257-amino-acid polypeptide reads, in one-letter code: Major prion protein (257 aa).

The N-terminal stretch at 1–24 is a signal peptide; the sequence is MVKSHIGSWLLVLFVATWSDIGFC. Residues 25–234 are interaction with GRB2, ERI3 and SYN1; it reads KKRPKPGGGW…ESEAYYQRGA (210 aa). The disordered stretch occupies residues 27–114; that stretch reads RPKPGGGWNT…KPSKPKTNMK (88 aa). Tandem repeats lie at residues 54–62, 63–70, 71–78, 79–86, and 87–95. Positions 54 to 95 are 5 X 8 AA tandem repeats of P-H-G-G-G-W-G-Q; the sequence is PQGGGGWGQPHGGGWGQPHGGGWGQPHGGGWGQPHGGGGWGQ. Residues 55-101 show a composition bias toward gly residues; sequence QGGGGWGQPHGGGWGQPHGGGWGQPHGGGWGQPHGGGGWGQGGGSHG. Cu(2+) contacts are provided by His-64, Gly-65, Gly-66, His-72, Gly-73, Gly-74, His-80, Gly-81, Gly-82, His-88, Gly-90, and Gly-91. The cysteines at positions 183 and 218 are disulfide-linked. Residues Asn-185 and Asn-201 are each glycosylated (N-linked (GlcNAc...) asparagine). Ala-234 carries the GPI-anchor amidated alanine lipid modification. Positions 235 to 257 are cleaved as a propeptide — removed in mature form; sequence SAILFSPPPVILLISLLILLIVG.

The protein belongs to the prion family. In terms of assembly, monomer and homodimer. Has a tendency to aggregate into amyloid fibrils containing a cross-beta spine, formed by a steric zipper of superposed beta-strands. Soluble oligomers may represent an intermediate stage on the path to fibril formation. Copper binding may promote oligomerization. Interacts with GRB2, APP, ERI3/PRNPIP and SYN1. Mislocalized cytosolically exposed PrP interacts with MGRN1; this interaction alters MGRN1 subcellular location and causes lysosomal enlargement. Interacts with KIAA1191.

It localises to the cell membrane. The protein resides in the golgi apparatus. Functionally, its primary physiological function is unclear. Has cytoprotective activity against internal or environmental stresses. May play a role in neuronal development and synaptic plasticity. May be required for neuronal myelin sheath maintenance. May play a role in iron uptake and iron homeostasis. Soluble oligomers are toxic to cultured neuroblastoma cells and induce apoptosis (in vitro). Association with GPC1 (via its heparan sulfate chains) targets PRNP to lipid rafts. Also provides Cu(2+) or Zn(2+) for the ascorbate-mediated GPC1 deaminase degradation of its heparan sulfate side chains. This Mustela putorius furo (European domestic ferret) protein is Major prion protein (PRNP).